The following is a 592-amino-acid chain: Beta-fructofuranosidase, insoluble isoenzyme 1 (592 aa).

Residues 1–39 (MGVTIRNRNYDHGSLPFLQSLLAILLVTTTTLHINGVEA) form the signal peptide. A propeptide spanning residues 40 to 48 (FHEIHYNLQ) is cleaved from the precursor. Asp-74 is an active-site residue. Asn-170 carries N-linked (GlcNAc...) (complex) asparagine glycosylation. Asn-195 is a glycosylation site (N-linked (GlcNAc...) asparagine). Asn-311 carries an N-linked (GlcNAc...) (complex) asparagine glycan. N-linked (GlcNAc...) (high mannose) asparagine glycosylation is present at Asn-348. The N-linked (GlcNAc...) asparagine glycan is linked to Asn-570.

It belongs to the glycosyl hydrolase 32 family. As to expression, in leaves and roots of young plants.

The protein localises to the secreted. The protein resides in the cell wall. It carries out the reaction Hydrolysis of terminal non-reducing beta-D-fructofuranoside residues in beta-D-fructofuranosides.. In terms of biological role, may play an important role in phloem unloading and in stress response. This chain is Beta-fructofuranosidase, insoluble isoenzyme 1 (INV1), found in Daucus carota (Wild carrot).